The chain runs to 61 residues: Early 3 Conserved Region 1-alpha protein (61 aa).

Residues 1–14 (MSNSSNSTSLSNFS) lie on the Lumenal side of the membrane. Residues asparagine 3, asparagine 6, and asparagine 12 are each glycosylated (N-linked (GlcNAc...) asparagine; by host). The chain crosses the membrane as a helical span at residues 15–35 (GIGVGVILTLVILFILILALL). At 36-61 (CLRVAACCTHVCTYCQLFKRWGQHPR) the chain is on the cytoplasmic side.

It belongs to the adenoviridae E3-CR1 family. In terms of assembly, interacts with E3 RID alpha and E3 RID beta. Only 1 of 3 three potential glycosylation sites is glycosylated. Oligosaccharides are not processed from high mannose to the complex type because the protein is retained in the endoplasmic reticulum.

Its subcellular location is the host endoplasmic reticulum membrane. The protein localises to the host cell membrane. In terms of biological role, prevents infected cell apoptosis induced by the host immune system. May act by down-regulating host TRAIL receptors. May act in complex with E3 RID alpha and beta. May play a role on cellular apoptosis regulation in the ER. The protein is Early 3 Conserved Region 1-alpha protein of Human adenovirus C serotype 2 (HAdV-2).